Here is a 260-residue protein sequence, read N- to C-terminus: Endomucin (260 aa).

A signal peptide spans 1–18 (MELLQVTILFLLPSICSS). 4 N-linked (GlcNAc...) asparagine glycosylation sites follow: Asn-19, Asn-28, Asn-97, and Asn-103. Over 19–189 (NSTGVLEAAN…TSATSRSYSS (171 aa)) the chain is Extracellular. 2 stretches are compositionally biased toward polar residues: residues 119 to 133 (QSSKPKTETQSSIKT) and 145 to 170 (ASPSETGTLSSIPVTIPENTSQSQVI). A disordered region spans residues 119-182 (QSSKPKTETQ…EGGKNASTSA (64 aa)). Asn-163 and Asn-177 each carry an N-linked (GlcNAc...) asparagine glycan. A helical transmembrane segment spans residues 190–210 (IILPVVIALIVITLSVFVLVG). Residues 211–260 (LYRMCWKADPGTPENGNDQPQSDKESVKLLTVKTISHESGEHSAQGKTKN) lie on the Cytoplasmic side of the membrane. The residue at position 236 (Ser-236) is a Phosphoserine.

Post-translationally, highly O-glycosylated. Sialic acid-rich glycoprotein.

Its subcellular location is the membrane. Endothelial sialomucin, also called endomucin or mucin-like sialoglycoprotein, which interferes with the assembly of focal adhesion complexes and inhibits interaction between cells and the extracellular matrix. This Pongo abelii (Sumatran orangutan) protein is Endomucin (EMCN).